Consider the following 129-residue polypeptide: Small ribosomal subunit protein uS11 (129 aa).

Belongs to the universal ribosomal protein uS11 family. Part of the 30S ribosomal subunit. Interacts with proteins S7 and S18. Binds to IF-3.

Functionally, located on the platform of the 30S subunit, it bridges several disparate RNA helices of the 16S rRNA. Forms part of the Shine-Dalgarno cleft in the 70S ribosome. The chain is Small ribosomal subunit protein uS11 from Rhizorhabdus wittichii (strain DSM 6014 / CCUG 31198 / JCM 15750 / NBRC 105917 / EY 4224 / RW1) (Sphingomonas wittichii).